The sequence spans 377 residues: Citrate synthase (377 aa).

Active-site residues include H220, H259, and D313.

It belongs to the citrate synthase family. Homodimer.

The catalysed reaction is oxaloacetate + acetyl-CoA + H2O = citrate + CoA + H(+). The protein operates within carbohydrate metabolism; tricarboxylic acid cycle; isocitrate from oxaloacetate: step 1/2. Might regulate the synthesis and function of enzymes involved in later enzymatic steps of Krebs cycle. Loss in activity results in sporulation defect. The polypeptide is Citrate synthase (gltA) (Deinococcus radiodurans (strain ATCC 13939 / DSM 20539 / JCM 16871 / CCUG 27074 / LMG 4051 / NBRC 15346 / NCIMB 9279 / VKM B-1422 / R1)).